Here is a 460-residue protein sequence, read N- to C-terminus: Hydroxymethylglutaryl-CoA synthase MYCGRDRAFT_54740 (460 aa).

Ala35 is a binding site for (3S)-3-hydroxy-3-methylglutaryl-CoA. Glu86 (proton donor/acceptor) is an active-site residue. Residues Cys120, Asn158, Thr162, Ser212, His262, Lys271, Asn339, and Ser373 each contribute to the (3S)-3-hydroxy-3-methylglutaryl-CoA site. Residue Cys120 is the Acyl-thioester intermediate of the active site. His262 functions as the Proton donor/acceptor in the catalytic mechanism.

It belongs to the thiolase-like superfamily. HMG-CoA synthase family.

It carries out the reaction acetoacetyl-CoA + acetyl-CoA + H2O = (3S)-3-hydroxy-3-methylglutaryl-CoA + CoA + H(+). Its pathway is siderophore biosynthesis. Its function is as follows. Hydroxymethylglutaryl-CoA synthase involved in the biosynthesis of a ferrichrome A-like siderophors which may contribute to organismal virulence. The first step of siderophore biosynthesis is performed by the HMG-CoA synthase (HMGS) MYCGRDRAFT_54740 which catalyzes the generation of HMG-CoA and CoA using acetoacetyl-CoA and acetyl-CoA as substrates. The enoyl-CoA isomerase/hydratase MYCGRDRAFT_76805 then catalyzes the conversion of HMG-CoA to methylglutaconyl-CoA. The acyltransferase MYCGRDRAFT_85486 then fuses methylglutaconyl-CoA with hydroxyornithine to yield methylglutaconyl hydroxyornithine. Methylglutaconyl hydroxyornithine is then available for use by the nonribosomal peptide synthetase NRPS2 to generate the ferrichrome A-like siderophore. The sequence is that of Hydroxymethylglutaryl-CoA synthase MYCGRDRAFT_54740 (ERG13) from Zymoseptoria tritici (strain CBS 115943 / IPO323) (Speckled leaf blotch fungus).